The sequence spans 162 residues: tRNA (cytidine(34)-2'-O)-methyltransferase (162 aa).

4 residues coordinate S-adenosyl-L-methionine: leucine 83, glycine 105, isoleucine 127, and serine 135.

The protein belongs to the class IV-like SAM-binding methyltransferase superfamily. RNA methyltransferase TrmH family. TrmL subfamily. As to quaternary structure, homodimer.

The protein localises to the cytoplasm. It catalyses the reaction cytidine(34) in tRNA + S-adenosyl-L-methionine = 2'-O-methylcytidine(34) in tRNA + S-adenosyl-L-homocysteine + H(+). The catalysed reaction is 5-carboxymethylaminomethyluridine(34) in tRNA(Leu) + S-adenosyl-L-methionine = 5-carboxymethylaminomethyl-2'-O-methyluridine(34) in tRNA(Leu) + S-adenosyl-L-homocysteine + H(+). Its function is as follows. Methylates the ribose at the nucleotide 34 wobble position in the two leucyl isoacceptors tRNA(Leu)(CmAA) and tRNA(Leu)(cmnm5UmAA). Catalyzes the methyl transfer from S-adenosyl-L-methionine to the 2'-OH of the wobble nucleotide. This is tRNA (cytidine(34)-2'-O)-methyltransferase from Yersinia pestis.